A 782-amino-acid chain; its full sequence is Acetazolamide conferring resistance protein zam (782 aa).

One can recognise an RNB domain in the interval 270–579 (EVALSLESQA…QRLLKLVLTE (310 aa)). The S1 motif domain maps to 655 to 736 (GEIFRGLITG…YRQQIDLGAV (82 aa)). A disordered region spans residues 737–782 (NNAPKDSANMDFDDDDEDGDEREEQDTMDWDAMEDGDDDEGGAVIF). Residues 747 to 782 (DFDDDDEDGDEREEQDTMDWDAMEDGDDDEGGAVIF) show a composition bias toward acidic residues.

Belongs to the RNR ribonuclease family.

Its function is as follows. Not known; control resistance to the carbonic anhydrase inhibitor acetazolamide. The chain is Acetazolamide conferring resistance protein zam (zam) from Synechocystis sp. (strain ATCC 27184 / PCC 6803 / Kazusa).